A 350-amino-acid chain; its full sequence is Anthranilate phosphoribosyltransferase (350 aa).

5-phospho-alpha-D-ribose 1-diphosphate contacts are provided by residues G94, 97–98 (GS), T102, 104–107 (NVST), 122–130 (KHGNRSVSS), and S134. Residue G94 coordinates anthranilate. S106 provides a ligand contact to Mg(2+). N125 contacts anthranilate. R180 serves as a coordination point for anthranilate. Mg(2+)-binding residues include D239 and E240.

It belongs to the anthranilate phosphoribosyltransferase family. As to quaternary structure, homodimer. Mg(2+) is required as a cofactor.

The catalysed reaction is N-(5-phospho-beta-D-ribosyl)anthranilate + diphosphate = 5-phospho-alpha-D-ribose 1-diphosphate + anthranilate. It functions in the pathway amino-acid biosynthesis; L-tryptophan biosynthesis; L-tryptophan from chorismate: step 2/5. Functionally, catalyzes the transfer of the phosphoribosyl group of 5-phosphorylribose-1-pyrophosphate (PRPP) to anthranilate to yield N-(5'-phosphoribosyl)-anthranilate (PRA). The chain is Anthranilate phosphoribosyltransferase from Geotalea uraniireducens (strain Rf4) (Geobacter uraniireducens).